The chain runs to 287 residues: Acetylglutamate kinase (287 aa).

Substrate is bound by residues 65–66 (GG), R87, and N181.

The protein belongs to the acetylglutamate kinase family. ArgB subfamily.

Its subcellular location is the cytoplasm. The enzyme catalyses N-acetyl-L-glutamate + ATP = N-acetyl-L-glutamyl 5-phosphate + ADP. Its pathway is amino-acid biosynthesis; L-arginine biosynthesis; N(2)-acetyl-L-ornithine from L-glutamate: step 2/4. Catalyzes the ATP-dependent phosphorylation of N-acetyl-L-glutamate. This chain is Acetylglutamate kinase, found in Syntrophomonas wolfei subsp. wolfei (strain DSM 2245B / Goettingen).